Consider the following 356-residue polypeptide: NADH-quinone oxidoreductase subunit H (356 aa).

9 consecutive transmembrane segments (helical) span residues 22-42 (GVVS…TAYL), 59-79 (PSLA…KLVF), 93-113 (FIIA…VIPI), 124-144 (IGGI…IIIA), 171-191 (MALS…IQIV), 198-218 (PIWL…SILA), 240-260 (VEYS…NMIL), 285-305 (IPGY…FLWI), and 321-341 (GLKV…TILV).

Belongs to the complex I subunit 1 family. NDH-1 is composed of 14 different subunits. Subunits NuoA, H, J, K, L, M, N constitute the membrane sector of the complex.

The protein resides in the cell inner membrane. It carries out the reaction a quinone + NADH + 5 H(+)(in) = a quinol + NAD(+) + 4 H(+)(out). Functionally, NDH-1 shuttles electrons from NADH, via FMN and iron-sulfur (Fe-S) centers, to quinones in the respiratory chain. The immediate electron acceptor for the enzyme in this species is believed to be ubiquinone. Couples the redox reaction to proton translocation (for every two electrons transferred, four hydrogen ions are translocated across the cytoplasmic membrane), and thus conserves the redox energy in a proton gradient. This subunit may bind ubiquinone. This Orientia tsutsugamushi (strain Boryong) (Rickettsia tsutsugamushi) protein is NADH-quinone oxidoreductase subunit H.